We begin with the raw amino-acid sequence, 248 residues long: Tryptophan synthase alpha chain (248 aa).

Catalysis depends on proton acceptor residues Glu-36 and Asp-47.

This sequence belongs to the TrpA family. In terms of assembly, tetramer of two alpha and two beta chains.

It carries out the reaction (1S,2R)-1-C-(indol-3-yl)glycerol 3-phosphate + L-serine = D-glyceraldehyde 3-phosphate + L-tryptophan + H2O. It participates in amino-acid biosynthesis; L-tryptophan biosynthesis; L-tryptophan from chorismate: step 5/5. Its function is as follows. The alpha subunit is responsible for the aldol cleavage of indoleglycerol phosphate to indole and glyceraldehyde 3-phosphate. The polypeptide is Tryptophan synthase alpha chain (Pyrococcus furiosus (strain ATCC 43587 / DSM 3638 / JCM 8422 / Vc1)).